The following is a 474-amino-acid chain: Receptor-transporting protein 3 (474 aa).

Residues methionine 1 to methionine 453 are Cytoplasmic-facing. Residues threonine 53–glycine 164 form a 3CxxC-type zinc finger. Residues serine 175–threonine 304 are disordered. 2 stretches are compositionally biased toward polar residues: residues valine 197 to lysine 228 and valine 259 to threonine 304. A helical membrane pass occupies residues serine 454–leucine 474.

It belongs to the TMEM7 family. Interacts with TAS2R16. As to expression, expressed predominantly in the liver. Not detected in the olfactory epithelium.

It is found in the membrane. Promotes functional cell surface expression of the bitter taste receptors TAS2R16 and TAS2R43. In Mus musculus (Mouse), this protein is Receptor-transporting protein 3 (Rtp3).